The chain runs to 91 residues: Non-specific lipid-transfer protein 1 (91 aa).

4 disulfides stabilise this stretch: C3–C50, C13–C27, C28–C73, and C48–C87. R44 and Y79 together coordinate a 1,2-diacyl-sn-glycero-3-phosphocholine.

Monomer.

Its function is as follows. Plant non-specific lipid-transfer proteins transfer phospholipids as well as galactolipids across membranes. May play a role in wax or cutin deposition in the cell walls of expanding epidermal cells and certain secretory tissues. Has antifungal activity against F.solani, F.oxysporum, P.aphanidermatum and S.rolfsii. Has antibacterial activity against the Gram-positive bacterium S.aureus but not against the Gram-negative bacterium S.typhimurium. The sequence is that of Non-specific lipid-transfer protein 1 from Vigna radiata var. radiata (Mung bean).